Here is a 497-residue protein sequence, read N- to C-terminus: uncharacterized protein (497 aa).

Basic and acidic residues predominate over residues 44–74 (IRQEKEMKRHDDDGRQYQSDRKFAKSKHDDI). Disordered stretches follow at residues 44–95 (IRQE…SVGR), 120–151 (VSRSSSIGHSGSTAPWSSVGRHNRKKDNEHRD), and 195–227 (GNVITPGVTSTTGAPSGKASLSRAASNSSTSAR). A compositionally biased stretch (low complexity) spans 120 to 131 (VSRSSSIGHSGS). Residues S123, S125, and S131 each carry the phosphoserine modification. T132 carries the post-translational modification Phosphothreonine. Low complexity predominate over residues 213-227 (ASLSRAASNSSTSAR). Position 258 is a phosphothreonine (T258). S310 carries the post-translational modification Phosphoserine. The segment covering 367 to 385 (NVNPSNQDLASVKQPSGFS) has biased composition (polar residues). The segment at 367–497 (NVNPSNQDLA…GFPDTSRPPH (131 aa)) is disordered. The segment covering 400 to 409 (NFSNDDSSFF) has biased composition (low complexity). Residue S436 is modified to Phosphoserine. The span at 448–472 (GLSSGASIPSAPPGFGYQQPSFPYS) shows a compositional bias: low complexity.

It is found in the cytoplasm. It localises to the nucleus. This is an uncharacterized protein from Schizosaccharomyces pombe (strain 972 / ATCC 24843) (Fission yeast).